Consider the following 667-residue polypeptide: Primary amine oxidase (667 aa).

An N-terminal signal peptide occupies residues 1–18 (KFALFSVLTLLSFHAVFS). N-linked (GlcNAc...) asparagine glycosylation occurs at Asn149. A disulfide bridge connects residues Cys155 and Cys176. Residues 216 to 246 (PTAENTEYQVSKQSPPFGPKQHSLTSHQPQG) are disordered. Positions 218-229 (AENTEYQVSKQS) are enriched in polar residues. Asn252 carries N-linked (GlcNAc...) asparagine glycosylation. 316–327 (FFDSGEFGFGLS) is a binding site for substrate. Catalysis depends on Asp318, which acts as the Proton acceptor. Cys337 and Cys363 are disulfide-bonded. Asn382 carries an N-linked (GlcNAc...) asparagine glycan. Residue 402-407 (VGNYDN) coordinates substrate. Tyr405 acts as the Schiff-base intermediate with substrate; via topaquinone in catalysis. Residue Tyr405 is modified to 2',4',5'-topaquinone. Cu cation is bound by residues His460 and His462. Residues Asp469, Phe470, and Asp471 each contribute to the Mn(2+) site. An N-linked (GlcNAc...) asparagine glycan is attached at Asn576. Mn(2+) is bound by residues Asp610 and Ile611. His621 contributes to the Cu cation binding site.

The protein belongs to the copper/topaquinone oxidase family. As to quaternary structure, homodimer. Cu cation is required as a cofactor. Requires Zn(2+) as cofactor. L-topaquinone serves as cofactor. It depends on Mn(2+) as a cofactor. In terms of processing, glycosylated; contains two carbohydrate chains per monomer. Post-translationally, topaquinone (TPQ) is generated by copper-dependent autoxidation of a specific tyrosyl residue.

The enzyme catalyses a primary methyl amine + O2 + H2O = an aldehyde + H2O2 + NH4(+). The polypeptide is Primary amine oxidase (Lens culinaris (Lentil)).